Consider the following 246-residue polypeptide: Metallo-beta-lactamase IMP-1 (246 aa).

An N-terminal signal peptide occupies residues 1–18; the sequence is MSKLSVFFIFLFCSIATA. Residues histidine 95, histidine 97, aspartate 99, histidine 157, and cysteine 176 each contribute to the Zn(2+) site. Residues lysine 179 and asparagine 185 each contribute to the a beta-lactam site. Histidine 215 contributes to the Zn(2+) binding site.

This sequence belongs to the metallo-beta-lactamase superfamily. Class-B beta-lactamase family. Monomer. The cofactor is Zn(2+).

It is found in the periplasm. It catalyses the reaction a beta-lactam + H2O = a substituted beta-amino acid. Inhibited by captopril stereoisomers, Hg(2+), Fe(2+), Cu(2+), chelating agents such as EDTA, dansyl derivatives, including dansyl-C4SH, bisthiazolidines, mercaptoacetic acid and by PMPC phosphonates. Inhibited by 3-(3-mercaptopropionylsulfanyl)-propionic acid pentafluorophenyl ester, via a covalent binding to Lys-179. Not susceptible to inactivation by the beta-lactamase-blocking agents clavulanic acid or cloxacillin. Functionally, class B beta-lactamase which confers resistance to the beta-lactam antibiotics, including penicillins, cephalosporins and carbapenems. Acts via hydrolysis of the beta-lactam ring. Has penicillin-, cephalosporin- and carbapenem-hydrolyzing activities. Has endoribonuclease activity, cleaving substrate RNAs preferentially between U/C and A, in vitro. The polypeptide is Metallo-beta-lactamase IMP-1 (Serratia marcescens).